The sequence spans 64 residues: Delta-buthitoxin-Hj2a (64 aa).

4 disulfides stabilise this stretch: Cys12–Cys63, Cys16–Cys36, Cys22–Cys46, and Cys26–Cys48. Arg64 carries the arginine amide modification.

It belongs to the long (4 C-C) scorpion toxin superfamily. Sodium channel inhibitor family. Alpha subfamily. In terms of tissue distribution, expressed by the venom gland.

It is found in the secreted. Its function is as follows. This non-amidated recombinant toxin slows fast inactivation on Nav1.1/SCN1A (EC(50)=52.8 nM), Nav1.4/SN4A (EC(50)=32 nM), Nav1.5/SCN5A (EC(50)=116.7 nM), Nav1.6/SCN8A (EC(50)=46.3 nM), and Nav1.7/SCN9A (EC(50)=147.4 nM) voltage-gated sodium channels. On Nav1.1/SCN1A channel, acts as an agonist by inducing a shift in both the voltage dependence of channel inactivation (alpha-toxin activity) and activation (beta-toxin activity). The chain is Delta-buthitoxin-Hj2a from Hottentotta judaicus (Black scorpion).